A 431-amino-acid polypeptide reads, in one-letter code: 3-phosphoshikimate 1-carboxyvinyltransferase (431 aa).

3-phosphoshikimate-binding residues include Lys21, Ser22, and Arg26. Lys21 contacts phosphoenolpyruvate. Residues Gly93 and Arg121 each coordinate phosphoenolpyruvate. 5 residues coordinate 3-phosphoshikimate: Ser166, Gln168, Ser192, Asp317, and Lys344. A phosphoenolpyruvate-binding site is contributed by Gln168. The active-site Proton acceptor is Asp317. Phosphoenolpyruvate-binding residues include Arg348 and Arg390.

Belongs to the EPSP synthase family. Monomer.

It localises to the cytoplasm. The catalysed reaction is 3-phosphoshikimate + phosphoenolpyruvate = 5-O-(1-carboxyvinyl)-3-phosphoshikimate + phosphate. It participates in metabolic intermediate biosynthesis; chorismate biosynthesis; chorismate from D-erythrose 4-phosphate and phosphoenolpyruvate: step 6/7. Functionally, catalyzes the transfer of the enolpyruvyl moiety of phosphoenolpyruvate (PEP) to the 5-hydroxyl of shikimate-3-phosphate (S3P) to produce enolpyruvyl shikimate-3-phosphate and inorganic phosphate. The sequence is that of 3-phosphoshikimate 1-carboxyvinyltransferase from Herpetosiphon aurantiacus (strain ATCC 23779 / DSM 785 / 114-95).